A 401-amino-acid chain; its full sequence is Mu-type opioid receptor (401 aa).

Residues 1-69 (MDSGAVPTNA…CPSAGSPSMI (69 aa)) lie on the Extracellular side of the membrane. N-linked (GlcNAc...) asparagine glycosylation is found at N9, N12, N34, N41, and N49. A helical transmembrane segment spans residues 70–94 (TAIIIMALYSIVCVVGLFGNFLVMY). The Cytoplasmic segment spans residues 95–107 (VIVRYTKMKTATN). Residues 108–132 (IYIFNLALADALATSTLPFQSVNYL) traverse the membrane as a helical segment. The Extracellular segment spans residues 133 to 143 (MGTWPFGTILC). Residues C143 and C220 are joined by a disulfide bond. A helical transmembrane segment spans residues 144–166 (KIVISIDYYNMFTSIFTLCTMSV). Topologically, residues 167–186 (DRYIAVCHPVKALDLRTPRN) are cytoplasmic. Y169 carries the phosphotyrosine modification. Residues 187-208 (AKIINICNWILSSAIGLPVMFM) form a helical membrane-spanning segment. The Extracellular segment spans residues 209 to 231 (ATTKYRQGSIDCTLTFSHPTWYW). A helical membrane pass occupies residues 232–256 (ENLLKICVFIFAFIMPILIITVCYG). Topologically, residues 257–280 (LMILRLKSVRMLSGSKEKDRNLRR) are cytoplasmic. The helical transmembrane segment at 281–307 (ITRMVLVVVAVFIVCWTPIHIYVIIKA) threads the bilayer. The Extracellular portion of the chain corresponds to 308–315 (LITIPETT). Residues 316–339 (FQTVSWHFCIALGYTNSCLNPVLY) form a helical membrane-spanning segment. Residues 335 to 339 (NPVLY) carry the NPxxY; plays a role in stabilizing the activated conformation of the receptor motif. The Cytoplasmic portion of the chain corresponds to 340–401 (AFLDENFKRC…NLEAETTPLP (62 aa)). The S-palmitoyl cysteine moiety is linked to residue C354. A disordered region spans residues 365–389 (NSTRIRQNTRDHPSTANTVDRTNHQ). Position 366 is a phosphoserine (S366). Position 373 is a phosphothreonine (T373). S378 carries the post-translational modification Phosphoserine. At T397 the chain carries Phosphothreonine.

The protein belongs to the G-protein coupled receptor 1 family. As to quaternary structure, forms homooligomers and heterooligomers with other GPCRs, such as OPRD1, OPRK1, OPRL1, NPFFR2, ADRA2A, SSTR2, CNR1 and CCR5 (probably in dimeric forms). Interacts with heterotrimeric G proteins; interaction with a heterotrimeric complex containing GNAI1, GNB1 and GNG2 stabilizes the active conformation of the receptor and increases its affinity for endomorphin-2, the synthetic opioid peptide DAMGO and for morphinan agonists. Interacts with PPL; the interaction disrupts agonist-mediated G-protein activation. Interacts (via C-terminus) with DNAJB4 (via C-terminus). Interacts with calmodulin; the interaction inhibits the constitutive activity of OPRM1; it abolishes basal and attenuates agonist-stimulated G-protein coupling. Interacts with FLNA, PLD2, RANBP9 and WLS and GPM6A. Interacts with RTP4. Interacts with SYP and GNAS. Interacts with RGS9, RGS17, RGS20, RGS4, PPP1R9B and HINT1. Phosphorylated. Differentially phosphorylated in basal and agonist-induced conditions. Agonist-mediated phosphorylation modulates receptor internalization. Phosphorylated by GRK2 in a agonist-dependent manner. Phosphorylation at Tyr-169 requires receptor activation, is dependent on non-receptor protein tyrosine kinase Src and results in a decrease in agonist efficacy by reducing G-protein coupling efficiency. Phosphorylated on tyrosine residues; the phosphorylation is involved in agonist-induced G-protein-independent receptor down-regulation. Phosphorylation at Ser-378 is involved in G-protein-dependent but not beta-arrestin-dependent activation of the ERK pathway. In terms of processing, ubiquitinated. A basal ubiquitination seems not to be related to degradation. Ubiquitination is increased upon formation of OPRM1:OPRD1 oligomers leading to proteasomal degradation; the ubiquitination is diminished by RTP4.

The protein resides in the cell membrane. It localises to the cell projection. The protein localises to the axon. Its subcellular location is the perikaryon. It is found in the dendrite. The protein resides in the endosome. Functionally, receptor for endogenous opioids such as beta-endorphin and endomorphin. Receptor for natural and synthetic opioids including morphine, heroin, DAMGO, fentanyl, etorphine, buprenorphin and methadone. Also activated by enkephalin peptides, such as Met-enkephalin or Met-enkephalin-Arg-Phe, with higher affinity for Met-enkephalin-Arg-Phe. Agonist binding to the receptor induces coupling to an inactive GDP-bound heterotrimeric G-protein complex and subsequent exchange of GDP for GTP in the G-protein alpha subunit leading to dissociation of the G-protein complex with the free GTP-bound G-protein alpha and the G-protein beta-gamma dimer activating downstream cellular effectors. The agonist- and cell type-specific activity is predominantly coupled to pertussis toxin-sensitive G(i) and G(o) G alpha proteins, GNAI1, GNAI2, GNAI3 and GNAO1, and to a lesser extent to pertussis toxin-insensitive G alpha proteins GNAZ and GNA15. They mediate an array of downstream cellular responses, including inhibition of adenylate cyclase activity and both N-type and L-type calcium channels, activation of inward rectifying potassium channels, mitogen-activated protein kinase (MAPK), phospholipase C (PLC), phosphoinositide/protein kinase (PKC), phosphoinositide 3-kinase (PI3K) and regulation of NF-kappa-B. Also couples to adenylate cyclase stimulatory G alpha proteins. The selective temporal coupling to G-proteins and subsequent signaling can be regulated by RGSZ proteins, such as RGS9, RGS17 and RGS4. Phosphorylation by members of the GPRK subfamily of Ser/Thr protein kinases and association with beta-arrestins is involved in short-term receptor desensitization. Beta-arrestins associate with the GPRK-phosphorylated receptor and uncouple it from the G-protein thus terminating signal transduction. The phosphorylated receptor is internalized through endocytosis via clathrin-coated pits which involves beta-arrestins. The activation of the ERK pathway occurs either in a G-protein-dependent or a beta-arrestin-dependent manner and is regulated by agonist-specific receptor phosphorylation. Acts as a class A G-protein coupled receptor (GPCR) which dissociates from beta-arrestin at or near the plasma membrane and undergoes rapid recycling. Receptor down-regulation pathways are varying with the agonist and occur dependent or independent of G-protein coupling. Endogenous ligands induce rapid desensitization, endocytosis and recycling. Heterooligomerization with other GPCRs can modulate agonist binding, signaling and trafficking properties. Involved in neurogenesis. In Bos taurus (Bovine), this protein is Mu-type opioid receptor (OPRM1).